We begin with the raw amino-acid sequence, 264 residues long: Glutamate racemase 2 (264 aa).

Residues D10–S11 and Y42–G43 contribute to the substrate site. The Proton donor/acceptor role is filled by C73. N74–T75 is a substrate binding site. C181 acts as the Proton donor/acceptor in catalysis. T182–H183 contributes to the substrate binding site.

The protein belongs to the aspartate/glutamate racemases family.

The catalysed reaction is L-glutamate = D-glutamate. It functions in the pathway cell wall biogenesis; peptidoglycan biosynthesis. Provides the (R)-glutamate required for cell wall biosynthesis. The polypeptide is Glutamate racemase 2 (Caldanaerobacter subterraneus subsp. tengcongensis (strain DSM 15242 / JCM 11007 / NBRC 100824 / MB4) (Thermoanaerobacter tengcongensis)).